A 376-amino-acid polypeptide reads, in one-letter code: UDP-4-amino-4,6-dideoxy-N-acetyl-beta-L-altrosamine transaminase (376 aa).

Residues Tyr4, 24–27 (EILT), Ala54, and Ser176 each bind substrate. At Lys181 the chain carries N6-(pyridoxal phosphate)lysine. Residues Asn226 and 311-314 (QVHY) each bind substrate.

Belongs to the DegT/DnrJ/EryC1 family.

The enzyme catalyses UDP-4-amino-4,6-dideoxy-N-acetyl-beta-L-altrosamine + 2-oxoglutarate = UDP-2-acetamido-2,6-dideoxy-beta-L-arabino-hex-4-ulose + L-glutamate. Catalyzes the second step in the biosynthesis of pseudaminic acid, a sialic-acid-like sugar that is used to modify flagellin. Uses UDP-2-acetamido-2,6-dideoxy-beta-L-arabino-4-hexulose as substrate producing UDP-4-amino-4,6-dideoxy-beta-L-AltNAc. The chain is UDP-4-amino-4,6-dideoxy-N-acetyl-beta-L-altrosamine transaminase (pseC) from Campylobacter jejuni subsp. jejuni serotype O:2 (strain ATCC 700819 / NCTC 11168).